A 421-amino-acid chain; its full sequence is Imidazolonepropionase (421 aa).

Fe(3+)-binding residues include H81 and H83. Zn(2+)-binding residues include H81 and H83. 4-imidazolone-5-propanoate is bound by residues R90, Y153, and H186. Y153 lines the N-formimidoyl-L-glutamate pocket. H251 contributes to the Fe(3+) binding site. H251 is a Zn(2+) binding site. 4-imidazolone-5-propanoate is bound at residue E254. D326 contacts Fe(3+). D326 lines the Zn(2+) pocket. 2 residues coordinate N-formimidoyl-L-glutamate: N328 and G330. Residue S331 coordinates 4-imidazolone-5-propanoate.

This sequence belongs to the metallo-dependent hydrolases superfamily. HutI family. Zn(2+) serves as cofactor. Requires Fe(3+) as cofactor.

The protein resides in the cytoplasm. It catalyses the reaction 4-imidazolone-5-propanoate + H2O = N-formimidoyl-L-glutamate. Its pathway is amino-acid degradation; L-histidine degradation into L-glutamate; N-formimidoyl-L-glutamate from L-histidine: step 3/3. Catalyzes the hydrolytic cleavage of the carbon-nitrogen bond in imidazolone-5-propanoate to yield N-formimidoyl-L-glutamate. It is the third step in the universal histidine degradation pathway. This Streptococcus sanguinis (strain SK36) protein is Imidazolonepropionase.